Consider the following 95-residue polypeptide: Co-chaperonin GroES (95 aa).

It belongs to the GroES chaperonin family. Heptamer of 7 subunits arranged in a ring. Interacts with the chaperonin GroEL.

Its subcellular location is the cytoplasm. Its function is as follows. Together with the chaperonin GroEL, plays an essential role in assisting protein folding. The GroEL-GroES system forms a nano-cage that allows encapsulation of the non-native substrate proteins and provides a physical environment optimized to promote and accelerate protein folding. GroES binds to the apical surface of the GroEL ring, thereby capping the opening of the GroEL channel. The protein is Co-chaperonin GroES of Chlorobium phaeovibrioides (strain DSM 265 / 1930) (Prosthecochloris vibrioformis (strain DSM 265)).